The following is a 140-amino-acid chain: Large ribosomal subunit protein uL13 (140 aa).

As to quaternary structure, part of the 50S ribosomal subunit.

Functionally, this protein is one of the early assembly proteins of the 50S ribosomal subunit, although it is not seen to bind rRNA by itself. It is important during the early stages of 50S assembly. The sequence is that of Large ribosomal subunit protein uL13 from Thermus thermophilus (strain ATCC 27634 / DSM 579 / HB8).